The following is a 116-amino-acid chain: Large ribosomal subunit protein eL31 (116 aa).

The protein belongs to the eukaryotic ribosomal protein eL31 family.

The polypeptide is Large ribosomal subunit protein eL31 (RPL31) (Chlamydomonas reinhardtii (Chlamydomonas smithii)).